The chain runs to 455 residues: uncharacterized protein (455 aa).

Positions 1–20 are enriched in low complexity; sequence MGCCLSKKPSPSLPSSVKPS. Disordered regions lie at residues 1-234 and 258-304; these read MGCC…IPAT and RIAA…QNTK. Composition is skewed to basic and acidic residues over residues 35-46, 61-75, 129-143, 156-166, and 173-186; these read EEAKPKSEKLNQ, SHEE…DKDS, RSFD…RGGD, RGVERVHGSPR, and PSRE…RERG. Polar residues predominate over residues 213-224; that stretch reads SCGSSVNSSNNR. A compositionally biased stretch (low complexity) spans 260–271; it reads AASPRSKSPARA.

This is an uncharacterized protein from Arabidopsis thaliana (Mouse-ear cress).